Reading from the N-terminus, the 198-residue chain is Ribonuclease HII (198 aa).

One can recognise an RNase H type-2 domain in the interval 10–198 (QLVAGVDEVG…PVKRALGLAS (189 aa)). A divalent metal cation-binding residues include Asp-16, Glu-17, and Asp-108.

It belongs to the RNase HII family. Mn(2+) serves as cofactor. The cofactor is Mg(2+).

It localises to the cytoplasm. It carries out the reaction Endonucleolytic cleavage to 5'-phosphomonoester.. Endonuclease that specifically degrades the RNA of RNA-DNA hybrids. This Escherichia coli O81 (strain ED1a) protein is Ribonuclease HII.